The sequence spans 207 residues: ATP-dependent Clp protease proteolytic subunit (207 aa).

Ser-111 (nucleophile) is an active-site residue. Residue His-136 is part of the active site.

This sequence belongs to the peptidase S14 family. In terms of assembly, fourteen ClpP subunits assemble into 2 heptameric rings which stack back to back to give a disk-like structure with a central cavity, resembling the structure of eukaryotic proteasomes.

It localises to the cytoplasm. The catalysed reaction is Hydrolysis of proteins to small peptides in the presence of ATP and magnesium. alpha-casein is the usual test substrate. In the absence of ATP, only oligopeptides shorter than five residues are hydrolyzed (such as succinyl-Leu-Tyr-|-NHMec, and Leu-Tyr-Leu-|-Tyr-Trp, in which cleavage of the -Tyr-|-Leu- and -Tyr-|-Trp bonds also occurs).. In terms of biological role, cleaves peptides in various proteins in a process that requires ATP hydrolysis. Has a chymotrypsin-like activity. Plays a major role in the degradation of misfolded proteins. This is ATP-dependent Clp protease proteolytic subunit from Aliivibrio fischeri (strain ATCC 700601 / ES114) (Vibrio fischeri).